We begin with the raw amino-acid sequence, 264 residues long: Fibroblast growth factor 5 (264 aa).

An N-terminal signal peptide occupies residues 1-20 (MSLSLLFLIFCSHLIHSAWA). The interval 25 to 81 (RLTPEGQPAPPRNPGDSSGSRGRSSATFSSSSASSPVAASPGSQGSGSEHSSFQWSP) is disordered. A compositionally biased stretch (low complexity) spans 38–72 (PGDSSGSRGRSSATFSSSSASSPVAASPGSQGSGS). A glycan (N-linked (GlcNAc...) asparagine) is linked at Asn108. Positions 227 to 254 (FTVTVPEKKKPPVKPKVPLSQPRRSPSP) are disordered.

It belongs to the heparin-binding growth factors family. Interacts with FGFR1 and FGFR2. Affinity between fibroblast growth factors (FGFs) and their receptors is increased by heparan sulfate glycosaminoglycans that function as coreceptors.

Its subcellular location is the secreted. In terms of biological role, plays an important role in the regulation of cell proliferation and cell differentiation. Required for normal regulation of the hair growth cycle. Functions as an inhibitor of hair elongation by promoting progression from anagen, the growth phase of the hair follicle, into catagen the apoptosis-induced regression phase. The chain is Fibroblast growth factor 5 (Fgf5) from Mus musculus (Mouse).